The sequence spans 424 residues: L-glutamine:2-deoxy-scyllo-inosose aminotransferase (424 aa).

Residue lysine 202 is modified to N6-(pyridoxal phosphate)lysine.

Belongs to the DegT/DnrJ/EryC1 family. L-glutamine:2-deoxy-scyllo-inosose/scyllo-inosose aminotransferase subfamily. Requires pyridoxal 5'-phosphate as cofactor.

It carries out the reaction 2-deoxy-L-scyllo-inosose + L-glutamine = 2-deoxy-scyllo-inosamine + 2-oxoglutaramate. It catalyses the reaction 3-amino-2,3-dideoxy-scyllo-inosose + L-glutamine = 2-deoxystreptamine + 2-oxoglutaramate. The protein operates within metabolic intermediate biosynthesis; 2-deoxystreptamine biosynthesis; 2-deoxystreptamine from D-glucose 6-phosphate: step 2/4. Its pathway is metabolic intermediate biosynthesis; 2-deoxystreptamine biosynthesis; 2-deoxystreptamine from D-glucose 6-phosphate: step 4/4. It functions in the pathway antibiotic biosynthesis; ribostamycin biosynthesis. Functionally, catalyzes the PLP-dependent transamination of 2-deoxy-scyllo-inosose (2-DOI) to form 2-deoxy-scyllo-inosamine (2-DOIA) using L-glutamine as the amino donor. Also catalyzes the transamination of 3-amino-2,3-dideoxy-scyllo-inosose (keto-2-DOIA) into 2-deoxystreptamine (2-DOS). This chain is L-glutamine:2-deoxy-scyllo-inosose aminotransferase (rbmB), found in Streptomyces ribosidificus.